A 119-amino-acid polypeptide reads, in one-letter code: Basic phospholipase A2 taipoxin alpha chain (119 aa).

Intrachain disulfides connect C11-C72, C27-C118, C29-C45, C44-C99, C51-C92, C61-C85, and C79-C90. Ca(2+) is bound by residues Y28, G30, and G32. H48 is an active-site residue. D49 serves as a coordination point for Ca(2+). D93 is an active-site residue.

This sequence belongs to the phospholipase A2 family. Group I subfamily. D49 sub-subfamily. In terms of assembly, heterotrimer of alpha, beta, and gamma chains; non-covalently linked. The cofactor is Ca(2+). In terms of tissue distribution, expressed by the venom gland.

Its subcellular location is the secreted. It carries out the reaction a 1,2-diacyl-sn-glycero-3-phosphocholine + H2O = a 1-acyl-sn-glycero-3-phosphocholine + a fatty acid + H(+). In terms of biological role, heterotrimer: Snake venom phospholipase A2 (PLA2) heterotrimer that acts as a potent presynaptic neurotoxin by blocking synaptic transmission and synaptic vesicle recycling. May act by binding in a calcium-dependent fashion to neurotonal pentraxin-1 (NPTX1) and neurotonal pentraxin-2 (NPTX2), but not to neuronal pentraxin receptor (NPTXR). Also binds to taipoxin-associated calcium binding protein 49 (RCN2), a protein localized in the lumen of endoplasmic reticulum. Functionally, monomer (alpha chain): Snake venom phospholipase A2 (PLA2) alpha chain that possesses the same high enzymatic activity as the heterotrimer. PLA2 catalyzes the calcium-dependent hydrolysis of the 2-acyl groups in 3-sn-phosphoglycerides. In Oxyuranus scutellatus scutellatus (Australian taipan), this protein is Basic phospholipase A2 taipoxin alpha chain.